The primary structure comprises 93 residues: Alpha-defensin 16 (93 aa).

The first 19 residues, M1–A19, serve as a signal peptide directing secretion. Residues D20–S58 constitute a propeptide that is removed on maturation. The disordered stretch occupies residues I22 to L54. 3 disulfides stabilise this stretch: C64/C92, C66/C81, and C71/C91.

Belongs to the alpha-defensin family. Paneth cells of the small bowel.

The protein localises to the secreted. Its function is as follows. Probably contributes to the antimicrobial barrier function of the small bowel mucosa. This Mus musculus (Mouse) protein is Alpha-defensin 16 (Defa16).